The chain runs to 511 residues: Maturase K (511 aa).

It belongs to the intron maturase 2 family. MatK subfamily.

Its subcellular location is the plastid. It is found in the chloroplast. In terms of biological role, usually encoded in the trnK tRNA gene intron. Probably assists in splicing its own and other chloroplast group II introns. The chain is Maturase K from Bromelia plumieri (Karatas).